The sequence spans 123 residues: Kininogen (123 aa).

Bradykinin is released from kininogen by kallikrein. In terms of processing, N-glycosylated. Contains sulfated N-acetylglucosamine and O-acetylated sialic acids as terminal elements on biantennary and triantennary N-glycans.

Functionally, inhibits papain and ficin (cysteine proteinases) but not trypsin (a serine proteinase). This Gadus morhua (Atlantic cod) protein is Kininogen.